A 244-amino-acid chain; its full sequence is Acetoacetate decarboxylase (244 aa).

The active-site Schiff-base intermediate with acetoacetate is K115.

This sequence belongs to the ADC family. Homododecamer.

It carries out the reaction acetoacetate + H(+) = acetone + CO2. Catalyzes the conversion of acetoacetate to acetone and carbon dioxide. The polypeptide is Acetoacetate decarboxylase (Clostridium acetobutylicum (strain ATCC 824 / DSM 792 / JCM 1419 / IAM 19013 / LMG 5710 / NBRC 13948 / NRRL B-527 / VKM B-1787 / 2291 / W)).